Here is a 288-residue protein sequence, read N- to C-terminus: 2-hydroxy-6-oxononadienedioate/2-hydroxy-6-oxononatrienedioate hydrolase (288 aa).

Histidine 267 (proton acceptor) is an active-site residue.

The protein belongs to the AB hydrolase superfamily. MhpC family. In terms of assembly, homodimer.

The enzyme catalyses (2Z,4E)-2-hydroxy-6-oxonona-2,4-dienedioate + H2O = (2Z)-2-hydroxypenta-2,4-dienoate + succinate + H(+). It carries out the reaction (2Z,4E,7E)-2-hydroxy-6-oxonona-2,4,7-trienedioate + H2O = (2Z)-2-hydroxypenta-2,4-dienoate + fumarate + H(+). It functions in the pathway aromatic compound metabolism; 3-phenylpropanoate degradation. In terms of biological role, catalyzes the cleavage of the C5-C6 bond of 2-hydroxy-6-oxononadienedioate and 2-hydroxy-6-oxononatrienedioate, a dienol ring fission product of the bacterial meta-cleavage pathway for degradation of phenylpropionic acid. This Escherichia coli (strain K12 / DH10B) protein is 2-hydroxy-6-oxononadienedioate/2-hydroxy-6-oxononatrienedioate hydrolase.